The chain runs to 300 residues: Ornithine carbamoyltransferase (300 aa).

Residues 49-52 (STRT), Gln-76, Arg-100, and 127-130 (HPCQ) contribute to the carbamoyl phosphate site. L-ornithine is bound by residues Asn-158, Asp-218, and 222 to 223 (SM). Carbamoyl phosphate is bound by residues 258–259 (CL) and Arg-286.

Belongs to the aspartate/ornithine carbamoyltransferase superfamily. OTCase family.

Its subcellular location is the cytoplasm. The catalysed reaction is carbamoyl phosphate + L-ornithine = L-citrulline + phosphate + H(+). It functions in the pathway amino-acid biosynthesis; L-arginine biosynthesis; L-arginine from L-ornithine and carbamoyl phosphate: step 1/3. Functionally, reversibly catalyzes the transfer of the carbamoyl group from carbamoyl phosphate (CP) to the N(epsilon) atom of ornithine (ORN) to produce L-citrulline. This Oleidesulfovibrio alaskensis (strain ATCC BAA-1058 / DSM 17464 / G20) (Desulfovibrio alaskensis) protein is Ornithine carbamoyltransferase.